Here is a 173-residue protein sequence, read N- to C-terminus: Secreted RxLR effector protein RXLR-C12 (173 aa).

Residues 1–18 (MLQFATAFLAISANVVMT) form the signal peptide. Residues 41 to 55 (RRLRTHEIGTVPEER) carry the RxLR-dEER motif. A glycan (N-linked (GlcNAc...) asparagine) is linked at N155.

The protein belongs to the RxLR effector family.

The protein localises to the secreted. The protein resides in the host cytoplasm. It is found in the host nucleus. Its function is as follows. Secreted effector that suppresses pattern-triggered immunity (PTI) in plant host. The protein is Secreted RxLR effector protein RXLR-C12 of Plasmopara halstedii (Downy mildew of sunflower).